Consider the following 421-residue polypeptide: Serine hydroxymethyltransferase (421 aa).

(6S)-5,6,7,8-tetrahydrofolate-binding positions include leucine 123 and 127–129; that span reads GHL. Lysine 232 is modified (N6-(pyridoxal phosphate)lysine).

This sequence belongs to the SHMT family. Homodimer. Pyridoxal 5'-phosphate serves as cofactor.

The protein localises to the cytoplasm. It carries out the reaction (6R)-5,10-methylene-5,6,7,8-tetrahydrofolate + glycine + H2O = (6S)-5,6,7,8-tetrahydrofolate + L-serine. The protein operates within one-carbon metabolism; tetrahydrofolate interconversion. Its pathway is amino-acid biosynthesis; glycine biosynthesis; glycine from L-serine: step 1/1. Its function is as follows. Catalyzes the reversible interconversion of serine and glycine with tetrahydrofolate (THF) serving as the one-carbon carrier. This reaction serves as the major source of one-carbon groups required for the biosynthesis of purines, thymidylate, methionine, and other important biomolecules. Also exhibits THF-independent aldolase activity toward beta-hydroxyamino acids, producing glycine and aldehydes, via a retro-aldol mechanism. This is Serine hydroxymethyltransferase from Ehrlichia canis (strain Jake).